The chain runs to 527 residues: MSEPGEEPVAAPAGPAPDPVLNELYGSERPAVELLPGVPLSPIVNSCWLPADAKAMLAESWIPVPPEDAGEEAGPPPPAFEAAAPEYNELVRRLAKTAPFRKWNELTIQAKQLEQEVAGLKGPDAEAKQAELENVKVQIADAEAAVAEVKQSFSDDPLSLTGWMQALTDLADGGMTTFEVSGQGWPYCSLRQLFGEMPSAAPPAGFFDGVERVLGTFKRRYEKERGPGSVQLMLKLAPNVFSDAWSTGGAPAAVAAVEAYVERARANVFGPDGGVTPEGVPEPLDLVQLVWWDFAAADPLPVLKALQRMATDQLQVDEDSGEVSVSEPKKIRGIGLVDFPADRLKAAIQAGVPITCVQVEHSVLVRSAQPVLDLCAKYGIKVLARGGTLGGLLSAKYLGAPPPDPVRGDADLDSVPGCLDAVNNVGGWARLQAALAVIKGIADKHGVKPETVALRWQIDAGCFPLVTTRWSSRVWRQFGYEGWSSFEVSGGRPGVDGPLFQVESFLDVEDVRALAGLAAVHLGPKAG.

Residues 1–22 (MSEPGEEPVAAPAGPAPDPVLN) are disordered. A coiled-coil region spans residues 101 to 153 (RKWNELTIQAKQLEQEVAGLKGPDAEAKQAELENVKVQIADAEAAVAEVKQSF). Residues arginine 191 and arginine 366 each carry the asymmetric dimethylarginine modification.

This sequence belongs to the aldo/keto reductase family. In terms of processing, asymmetrically dimethylated at Arg-191 and Arg-366 during flagellum resorption. Probably methylated by PRMT1.

It is found in the cytoplasm. It localises to the cytoskeleton. The protein resides in the flagellum axoneme. Functionally, flagellar radial spokes contribute to the regulation of dynein arm activity and thus the pattern of flagellar bending. They consist of a thin stalk, which is attached to the a subfiber of the outer doublet microtubule, and a bulbous head, which is attached to the stalk and appears to interact with the projections from the central pair of microtubules. The chain is Flagellar radial spoke protein 5 from Chlamydomonas reinhardtii (Chlamydomonas smithii).